The sequence spans 639 residues: tRNA 5-methylaminomethyl-2-thiouridine biosynthesis bifunctional protein MnmC (639 aa).

The interval 1–228 (MSEPIEWLED…KRDNLQATYA (228 aa)) is tRNA (mnm(5)s(2)U34)-methyltransferase. Residues 254 to 639 (VGAGLAGAAV…SERWLGYEPQ (386 aa)) form an FAD-dependent cmnm(5)s(2)U34 oxidoreductase region.

In the N-terminal section; belongs to the methyltransferase superfamily. tRNA (mnm(5)s(2)U34)-methyltransferase family. This sequence in the C-terminal section; belongs to the DAO family. It depends on FAD as a cofactor.

It is found in the cytoplasm. The enzyme catalyses 5-aminomethyl-2-thiouridine(34) in tRNA + S-adenosyl-L-methionine = 5-methylaminomethyl-2-thiouridine(34) in tRNA + S-adenosyl-L-homocysteine + H(+). In terms of biological role, catalyzes the last two steps in the biosynthesis of 5-methylaminomethyl-2-thiouridine (mnm(5)s(2)U) at the wobble position (U34) in tRNA. Catalyzes the FAD-dependent demodification of cmnm(5)s(2)U34 to nm(5)s(2)U34, followed by the transfer of a methyl group from S-adenosyl-L-methionine to nm(5)s(2)U34, to form mnm(5)s(2)U34. In Acidovorax sp. (strain JS42), this protein is tRNA 5-methylaminomethyl-2-thiouridine biosynthesis bifunctional protein MnmC.